We begin with the raw amino-acid sequence, 101 residues long: Small ribosomal subunit protein uS14 (101 aa).

Residues 1–21 (MAKVSLIKKNESRKKKSQSLH) are disordered. Residues 11-21 (ESRKKKSQSLH) show a composition bias toward basic residues.

This sequence belongs to the universal ribosomal protein uS14 family. In terms of assembly, part of the 30S ribosomal subunit. Contacts proteins S3 and S10.

Binds 16S rRNA, required for the assembly of 30S particles and may also be responsible for determining the conformation of the 16S rRNA at the A site. The chain is Small ribosomal subunit protein uS14 from Rickettsia canadensis (strain McKiel).